A 344-amino-acid polypeptide reads, in one-letter code: L-rhamnose-proton symporter (344 aa).

10 consecutive transmembrane segments (helical) span residues 4–24 (AITM…CFYA), 38–58 (WSVG…AILL), 72–92 (TLLP…NYGL), 101–121 (MGIG…TPIL), 137–157 (TLLG…AGQL), 175–195 (LVLA…MNAA), 214–234 (LPSY…FCFI), 259–279 (VLLS…YAWG), 290–310 (MSWM…GLVL), and 321–341 (VGVL…VGLG).

The protein belongs to the L-rhamnose transporter (TC 2.A.7.6) family.

It is found in the cell inner membrane. It catalyses the reaction L-rhamnopyranose(in) + H(+)(in) = L-rhamnopyranose(out) + H(+)(out). Uptake of L-rhamnose across the cytoplasmic membrane with the concomitant transport of protons into the cell (symport system). This is L-rhamnose-proton symporter from Enterobacter sp. (strain 638).